Reading from the N-terminus, the 291-residue chain is MSNSYLAFPNIDPVIFSIGPIALHWYGFMYLVGFVFAMWLATRRAAKPNSGWTKNEVENLLYAGFAGVFVGGRLGYVLFYNFPAFLDNPLYLFKVWDGGMSFHGGLVGVICAMWWFGRRTKRHFLQVADFIAPLVPFGLGMGRIGNFINGELWGRVTLDTPWAMLFPSSRGEDIALAATDPSLLSVLEQYGVLPRHPSQLYEMALEGIVLFIILNLYIRKPRPMGSVSGLFLIGYGIFRVIVEFFRQPDAQLGLFDGISMGQILSIPMILAGILMMIWAYKHQGNKVQEVK.

7 consecutive transmembrane segments (helical) span residues 21-41 (IALH…MWLA), 60-80 (LLYA…VLFY), 96-116 (WDGG…MWWF), 124-144 (FLQV…MGRI), 198-218 (SQLY…NLYI), 225-245 (GSVS…VEFF), and 258-278 (ISMG…MMIW). A 1,2-diacyl-sn-glycero-3-phospho-(1'-sn-glycerol) is bound at residue Arg-143.

It belongs to the Lgt family.

Its subcellular location is the cell inner membrane. The catalysed reaction is L-cysteinyl-[prolipoprotein] + a 1,2-diacyl-sn-glycero-3-phospho-(1'-sn-glycerol) = an S-1,2-diacyl-sn-glyceryl-L-cysteinyl-[prolipoprotein] + sn-glycerol 1-phosphate + H(+). It functions in the pathway protein modification; lipoprotein biosynthesis (diacylglyceryl transfer). Catalyzes the transfer of the diacylglyceryl group from phosphatidylglycerol to the sulfhydryl group of the N-terminal cysteine of a prolipoprotein, the first step in the formation of mature lipoproteins. This chain is Phosphatidylglycerol--prolipoprotein diacylglyceryl transferase, found in Photorhabdus laumondii subsp. laumondii (strain DSM 15139 / CIP 105565 / TT01) (Photorhabdus luminescens subsp. laumondii).